The sequence spans 337 residues: D-alanine--D-alanine ligase (337 aa).

The ATP-grasp domain occupies 126–326 (KQIWISNGLS…YADLVLWLLS (201 aa)). ATP is bound at residue 152-207 (VKHLGLPLIVKPAHEGSSLGLTKVKSVEELPAAYQLAAGLDKKVIAETCIVGDELT). 3 residues coordinate Mg(2+): Asp-279, Glu-293, and Asn-295.

Belongs to the D-alanine--D-alanine ligase family. It depends on Mg(2+) as a cofactor. Mn(2+) is required as a cofactor.

It localises to the cytoplasm. The catalysed reaction is 2 D-alanine + ATP = D-alanyl-D-alanine + ADP + phosphate + H(+). The protein operates within cell wall biogenesis; peptidoglycan biosynthesis. Functionally, cell wall formation. The sequence is that of D-alanine--D-alanine ligase from Polynucleobacter asymbioticus (strain DSM 18221 / CIP 109841 / QLW-P1DMWA-1) (Polynucleobacter necessarius subsp. asymbioticus).